The following is an 85-amino-acid chain: Beta-mammal/insect toxin Lqhb1 (85 aa).

The signal sequence occupies residues 1 to 19 (MKIIIFLIVSSLMLIGVKT). One can recognise an LCN-type CS-alpha/beta domain in the interval 20 to 82 (DNGYLLNKAT…LWAYATNKCN (63 aa)). Intrachain disulfides connect cysteine 31–cysteine 81, cysteine 35–cysteine 56, cysteine 42–cysteine 63, and cysteine 46–cysteine 65.

It belongs to the long (4 C-C) scorpion toxin superfamily. Sodium channel inhibitor family. Expressed by the venom gland.

It localises to the secreted. Functionally, beta toxins bind voltage-independently at site-4 of sodium channels (Nav) and shift the voltage of activation toward more negative potentials thereby affecting sodium channel activation and promoting spontaneous and repetitive firing. Competes, with apparent high affinity, with anti-insect and anti-mammalian beta-toxins for binding to cockroach and rat brain synaptosomes, respectively. Also competes with an anti-mammalian alpha-toxin on binding to rat brain sodium channels. Has a weak effect on cardiac sodium channels and a marked effect on rat brain and skeletal muscle sodium channels. The protein is Beta-mammal/insect toxin Lqhb1 of Leiurus hebraeus (Hebrew deathstalker scorpion).